A 755-amino-acid polypeptide reads, in one-letter code: MAGCLVPECADDISILLIDHDTASIASLTSMLQQFSKRVMSVDVASKALSMIEKQKKEIGLIIANIEMPHIDSHSFLNALLLKDIPLILINPEIKTKEPSDLLTKRACFSLDKPISNDDIKNMWQHVFSKKSQELKKINITEDQENVMDKDTYQIEAFRANLKRQRISQASLLGRRPFIDTFSTYETFQKRKSIANVEWKTTPSYAIEIENKRKEWKKSVGRRKSLWNSERHMKFIAAISILGEEDFRPKSILEIMNDPNLTHRQVGSHLQKYKAQIDQISYTLPRNESRSIDKTFEYPSNYKYPFKISDLTNNLIVSNSLWNSLEKKNSASASITQFLFKKPIGEKEETMPKFHIGGKLDLSNHSVHGNVLNKLSMNVNFVPSTISNNPAYNILSIDSSSIDSSSYTGLVSTGLSSENSPILYGLPSNDGASNTCTSQMESERISIPQYDPNQCHPHRSILETDVNQIDLDFTSILDSFDPLVDECLMKENNRFLPNPTMNLLDTDIDKMDWVSFIENLSHHDINMNHMDWDPSTANYVLPETNMNINFPEKHTNEIGWVSSQVGYVPFENMIPSEVDINHMGMGYSGGSIPPQEETNTNNVGFVSCEIHSEIPPKTNMAILETNYSNPLDWVFPEDITSLETNTIQKSLVSCETSYDALDNMVPLETNMEEMNDALYDISIEDLISFDIDANEKDIFSWLEDNGFSEENNMMESCEYHNIESVNQSDDMKIDDNFDDYRECMDWINEEMNKDV.

The Response regulatory domain maps to 14–128 (SILLIDHDTA…DIKNMWQHVF (115 aa)).

This sequence belongs to the ARR-like family.

Its subcellular location is the nucleus. This Arabidopsis thaliana (Mouse-ear cress) protein is Putative two-component response regulator-like APRR6 (APRR6).